A 228-amino-acid chain; its full sequence is Ribosomal RNA small subunit methyltransferase G (228 aa).

S-adenosyl-L-methionine-binding positions include Gly-89, Leu-94, 140–141 (VE), and Arg-159.

Belongs to the methyltransferase superfamily. RNA methyltransferase RsmG family.

Its subcellular location is the cytoplasm. The catalysed reaction is guanosine(527) in 16S rRNA + S-adenosyl-L-methionine = N(7)-methylguanosine(527) in 16S rRNA + S-adenosyl-L-homocysteine. In terms of biological role, specifically methylates the N7 position of guanine in position 527 of 16S rRNA. This is Ribosomal RNA small subunit methyltransferase G from Burkholderia ambifaria (strain MC40-6).